A 139-amino-acid chain; its full sequence is D-ribose pyranase (139 aa).

H20 functions as the Proton donor in the catalytic mechanism. Substrate-binding positions include D28, H106, and 128 to 130; that span reads YAN.

It belongs to the RbsD / FucU family. RbsD subfamily. In terms of assembly, homodecamer.

The protein resides in the cytoplasm. It catalyses the reaction beta-D-ribopyranose = beta-D-ribofuranose. It participates in carbohydrate metabolism; D-ribose degradation; D-ribose 5-phosphate from beta-D-ribopyranose: step 1/2. In terms of biological role, catalyzes the interconversion of beta-pyran and beta-furan forms of D-ribose. The protein is D-ribose pyranase of Haemophilus influenzae (strain PittGG).